The chain runs to 457 residues: MAISSRSVGMTEIHCNFPQNPFRRISRRISQFRAGFPDKKPAAGACEEQDELTSGSAARIQRRDKQLPEIIGSDRELMSKLTTLGRPYRHFPFMGNRHVETIFASFFRSWPVIKSRRECLRMEDGGTVELDWPLEGEDAELWNGELPVNSPVLILLPGLTGGSDDSYVKHMLLRARKHGWHSVVFNSRGCADSPVTTPQFYSASFTKDLCQVVKHVAVRFSESNIYAVGWSLGANILVRYLGEVAGNCPLSGAVSLCNPFNLVIADEDFHKGLGFNNVYDKALARGLRQIFPKHTRLFEGIEGEYNIPTVAKARSVRDFDGGLTRVSFGFQSVGDYYSNSSSSLSIKYVQTSLLCIQASNDPIAPSRGIPWEDIKENPNCLLVVTPNGGHLGWVAGDDAPFGAPWTDPLVMEYLEVLEKNQIEKPLRRTIDDVHTPRVDSVHTRETNNYKSPIENVN.

The interval 39–59 (KKPAAGACEEQDELTSGSAAR) is disordered. Residues 151 to 391 (PVLILLPGLT…LVVTPNGGHL (241 aa)) enclose the AB hydrolase-1 domain. Residues Ser-231, Asp-361, and His-390 each act as charge relay system in the active site. Residues 438-447 (VDSVHTRETN) show a composition bias toward basic and acidic residues. The tract at residues 438–457 (VDSVHTRETNNYKSPIENVN) is disordered. Residues 448–457 (NYKSPIENVN) are compositionally biased toward polar residues.

This sequence belongs to the AB hydrolase superfamily. AB hydrolase 4 family.

The polypeptide is Embryogenesis-associated protein EMB8 (EMB8) (Picea glauca (White spruce)).